A 241-amino-acid chain; its full sequence is Phosphoadenosine 5'-phosphosulfate reductase (241 aa).

Cysteine 235 acts as the Nucleophile; cysteine thiosulfonate intermediate in catalysis.

It belongs to the PAPS reductase family. CysH subfamily.

It is found in the cytoplasm. The catalysed reaction is [thioredoxin]-disulfide + sulfite + adenosine 3',5'-bisphosphate + 2 H(+) = [thioredoxin]-dithiol + 3'-phosphoadenylyl sulfate. It participates in sulfur metabolism; hydrogen sulfide biosynthesis; sulfite from sulfate: step 3/3. Functionally, catalyzes the formation of sulfite from phosphoadenosine 5'-phosphosulfate (PAPS) using thioredoxin as an electron donor. The sequence is that of Phosphoadenosine 5'-phosphosulfate reductase from Xanthomonas euvesicatoria pv. vesicatoria (strain 85-10) (Xanthomonas campestris pv. vesicatoria).